The chain runs to 213 residues: MKFFIDTANIDDIRAANSLGILAGVTTNPSLVAKEGVSFHDRLREITKEVSGSVSAEVISEDAEGMIEEGKELAAIAPNITVKVPMTLEGLKAVKVFSELNIKTNVTLIFNANQALLAARAGATYVSPFLGRLDDIGQDGMTLISAIAEIFDRHSVSTEIIAASIRHPLHVTDAALNGAHIATIPYKVLEQLVKHPLTDQGIQKFLDDWNSQK.

The active-site Schiff-base intermediate with substrate is Lys-83.

It belongs to the transaldolase family. Type 3B subfamily.

It is found in the cytoplasm. It carries out the reaction D-sedoheptulose 7-phosphate + D-glyceraldehyde 3-phosphate = D-erythrose 4-phosphate + beta-D-fructose 6-phosphate. The protein operates within carbohydrate degradation; pentose phosphate pathway; D-glyceraldehyde 3-phosphate and beta-D-fructose 6-phosphate from D-ribose 5-phosphate and D-xylulose 5-phosphate (non-oxidative stage): step 2/3. In terms of biological role, transaldolase is important for the balance of metabolites in the pentose-phosphate pathway. This is Probable transaldolase from Oceanobacillus iheyensis (strain DSM 14371 / CIP 107618 / JCM 11309 / KCTC 3954 / HTE831).